The primary structure comprises 908 residues: Protein translocase subunit SecA (908 aa).

Residues Gln-87, 105-109 (GEGKT), and Asp-512 contribute to the ATP site. Residues 860–908 (AESLVGSSDEHEAVTAQAPMIRDGEKVGRNDPCPCGSGRKYKQCHGKLS) are disordered. Zn(2+) is bound by residues Cys-892, Cys-894, Cys-903, and His-904. The segment covering 898–908 (RKYKQCHGKLS) has biased composition (basic residues).

This sequence belongs to the SecA family. As to quaternary structure, monomer and homodimer. Part of the essential Sec protein translocation apparatus which comprises SecA, SecYEG and auxiliary proteins SecDF-YajC and YidC. Zn(2+) is required as a cofactor.

The protein localises to the cell inner membrane. It localises to the cytoplasm. The catalysed reaction is ATP + H2O + cellular proteinSide 1 = ADP + phosphate + cellular proteinSide 2.. Functionally, part of the Sec protein translocase complex. Interacts with the SecYEG preprotein conducting channel. Has a central role in coupling the hydrolysis of ATP to the transfer of proteins into and across the cell membrane, serving both as a receptor for the preprotein-SecB complex and as an ATP-driven molecular motor driving the stepwise translocation of polypeptide chains across the membrane. The polypeptide is Protein translocase subunit SecA (Shewanella baltica (strain OS155 / ATCC BAA-1091)).